A 249-amino-acid polypeptide reads, in one-letter code: Long form salivary protein D7L (249 aa).

The signal sequence occupies residues 1–19; sequence MNAVITSLVFISLVGVGYS. Intrachain disulfides connect Cys-36/Cys-66 and Cys-62/Cys-112. Trp-49 serves as a coordination point for thromboxane A2. Position 52 (Trp-52) interacts with leukotriene C4. Thromboxane A2 is bound at residue Tyr-63. 2 residues coordinate leukotriene C4: Gly-136 and Lys-154. Residue Lys-154 coordinates thromboxane A2. Disulfide bonds link Cys-162/Cys-178, Cys-174/Cys-221, and Cys-211/Cys-230.

This sequence belongs to the PBP/GOBP family.

It localises to the secreted. Its function is as follows. Modulates blood feeding of female sandflies on vertebrate species by binding and sequestering different mediators involved in the host response. Binds leukotriene C4, leukotriene D4, leukotriene E4 and U-46619, a stable analog of thromboxane A2. Does not bind histamine or serotonin. Inhibits platelet aggregation induced by low concentrations of collagen in thromboxane A2-dependent manner. This Phlebotomus duboscqi (Sandfly) protein is Long form salivary protein D7L.